A 491-amino-acid polypeptide reads, in one-letter code: MAKQWEVVIGLETHAQLSTQSKIFSGTATQFGAAPNTQASPVDLALPGTLPVMNRGAVERAIQFGLAIGATVAPRSIFARKNYFYPDLPKGYQISQYEIPVVQGGQVTIQVPANEKAGKEAYEKVVNLTRAHLEEDAGKSLHEDFAGMTGIDLNRAGTPLLEIVTEPEMRSAAEAVAYAKTLHTLVTWLGICDGNMQEGSFRCDANVSVRPVGQAEFGTRAEIKNLNSFRFLEEAIQYEVRRQIELIEDGGTVVQETRLYDPDKRETRSMRSKEDAHDYRYFPDPDLMPLVIDAAWIERVKAEMTELPVAIQQRFVSQYGLTPYDANVLTSSKAMAAYYEAVVSKVGPANAKVAANWLMGEVSSQLNREGLDIAENPVSSAQLALLLQRIADGTISNKIAKEIFLAIWEEKATDESAADRIIEAKGLKQISDTGALEAIIDEVLAANPKSVEEFRAGKEKAFNALIGQAMKATKGKANPAQVNELLKKKLS.

It belongs to the GatB/GatE family. GatB subfamily. As to quaternary structure, heterotrimer of A, B and C subunits.

It carries out the reaction L-glutamyl-tRNA(Gln) + L-glutamine + ATP + H2O = L-glutaminyl-tRNA(Gln) + L-glutamate + ADP + phosphate + H(+). The enzyme catalyses L-aspartyl-tRNA(Asn) + L-glutamine + ATP + H2O = L-asparaginyl-tRNA(Asn) + L-glutamate + ADP + phosphate + 2 H(+). Functionally, allows the formation of correctly charged Asn-tRNA(Asn) or Gln-tRNA(Gln) through the transamidation of misacylated Asp-tRNA(Asn) or Glu-tRNA(Gln) in organisms which lack either or both of asparaginyl-tRNA or glutaminyl-tRNA synthetases. The reaction takes place in the presence of glutamine and ATP through an activated phospho-Asp-tRNA(Asn) or phospho-Glu-tRNA(Gln). The protein is Aspartyl/glutamyl-tRNA(Asn/Gln) amidotransferase subunit B of Paraburkholderia phytofirmans (strain DSM 17436 / LMG 22146 / PsJN) (Burkholderia phytofirmans).